We begin with the raw amino-acid sequence, 359 residues long: Molybdenum import ATP-binding protein ModC (359 aa).

The region spanning methionine 1–valine 233 is the ABC transporter domain. Glycine 32–threonine 39 is an ATP binding site. One can recognise a Mop domain in the interval alanine 289 to alanine 355.

This sequence belongs to the ABC transporter superfamily. Molybdate importer (TC 3.A.1.8) family. As to quaternary structure, the complex is composed of two ATP-binding proteins (ModC), two transmembrane proteins (ModB) and a solute-binding protein (ModA).

The protein localises to the cell inner membrane. The enzyme catalyses molybdate(out) + ATP + H2O = molybdate(in) + ADP + phosphate + H(+). Functionally, part of the ABC transporter complex ModABC involved in molybdenum import. Responsible for energy coupling to the transport system. In Brucella abortus (strain 2308), this protein is Molybdenum import ATP-binding protein ModC.